The chain runs to 319 residues: Sulfate adenylyltransferase subunit 2 (319 aa).

Disordered stretches follow at residues 1–22 (MNPGRGGAYAAGRDGTRGTRRP) and 296–319 (RGATRADDKLSEAAMEDRKREGYF).

The protein belongs to the PAPS reductase family. CysD subfamily.

The catalysed reaction is sulfate + ATP + H(+) = adenosine 5'-phosphosulfate + diphosphate. It functions in the pathway antibiotic biosynthesis; mitomycin C biosynthesis. In terms of biological role, with CysN forms the ATP sulfurylase (ATPS) that catalyzes the adenylation of sulfate producing adenosine 5'-phosphosulfate (APS) and diphosphate, the first enzymatic step in sulfur assimilation pathway. APS synthesis involves the formation of a high-energy phosphoric-sulfuric acid anhydride bond driven by GTP hydrolysis by CysN coupled to ATP hydrolysis by CysD. This Streptomyces lavendulae protein is Sulfate adenylyltransferase subunit 2 (mmcV).